The chain runs to 71 residues: MSLGVLAAGIAVLSGIGAGVGIGIAAGKAVEAVGRQPEASGRVMTFFILGAALCETTAIYGLVMAFMLMGR.

Helical transmembrane passes span Val5–Ala25 and Phe46–Phe66.

The protein belongs to the ATPase C chain family. As to quaternary structure, F-type ATPases have 2 components, F(1) - the catalytic core - and F(0) - the membrane proton channel. F(1) has five subunits: alpha(3), beta(3), gamma(1), delta(1), epsilon(1). F(0) has three main subunits: a(1), b(2) and c(10-14). The alpha and beta chains form an alternating ring which encloses part of the gamma chain. F(1) is attached to F(0) by a central stalk formed by the gamma and epsilon chains, while a peripheral stalk is formed by the delta and b chains.

It is found in the cell membrane. In terms of biological role, f(1)F(0) ATP synthase produces ATP from ADP in the presence of a proton or sodium gradient. F-type ATPases consist of two structural domains, F(1) containing the extramembraneous catalytic core and F(0) containing the membrane proton channel, linked together by a central stalk and a peripheral stalk. During catalysis, ATP synthesis in the catalytic domain of F(1) is coupled via a rotary mechanism of the central stalk subunits to proton translocation. Functionally, key component of the F(0) channel; it plays a direct role in translocation across the membrane. A homomeric c-ring of between 10-14 subunits forms the central stalk rotor element with the F(1) delta and epsilon subunits. The polypeptide is ATP synthase subunit c (Clostridium beijerinckii (strain ATCC 51743 / NCIMB 8052) (Clostridium acetobutylicum)).